The sequence spans 214 residues: Nodulation protein A (214 aa).

Belongs to the NodA family.

It localises to the cytoplasm. In terms of biological role, N-acyltransferase required for nodulation. Acts in the production of a small, heat-stable compound (Nod) that stimulates mitosis in various plant protoplasts. The polypeptide is Nodulation protein A (Methylobacterium nodulans (strain LMG 21967 / CNCM I-2342 / ORS 2060)).